A 369-amino-acid polypeptide reads, in one-letter code: 3 beta-hydroxysteroid dehydrogenase type 7 (369 aa).

Catalysis depends on Tyr-159, which acts as the Proton acceptor. Lys-163 contacts NAD(+). The next 2 helical transmembrane spans lie at 289-309 (LLPY…QWLL) and 311-331 (PLVL…NTTF).

This sequence belongs to the 3-beta-HSD family.

The protein resides in the endoplasmic reticulum membrane. It carries out the reaction 7alpha-hydroxycholesterol + NAD(+) = 7alpha-hydroxycholest-4-en-3-one + NADH + H(+). It catalyses the reaction 7alpha,25-dihydroxycholesterol + NAD(+) = 7alpha,25-dihydroxy-4-cholesten-3-one + NADH + H(+). The catalysed reaction is (25R)-cholest-5-en-3beta,7alpha,26-triol + NAD(+) = (25R)-7alpha,26-dihydroxycholest-4-en-3-one + NADH + H(+). The enzyme catalyses (24S)-7alpha-dihydroxycholesterol + NAD(+) = (24S)-7alpha,24-dihydroxycholest-4-en-3-one + NADH + H(+). It functions in the pathway lipid metabolism; steroid biosynthesis. Functionally, the 3-beta-HSD enzymatic system plays a crucial role in the biosynthesis of all classes of hormonal steroids. HSD VII is active against four 7-alpha-hydroxylated sterols. Does not metabolize several different C(19/21) steroids as substrates. Involved in bile acid synthesis. Plays a key role in cell positioning and movement in lymphoid tissues by mediating degradation of 7-alpha,25-dihydroxycholesterol (7-alpha,25-OHC): 7-alpha,25-OHC acts as a ligand for the G protein-coupled receptor GPR183/EBI2, a chemotactic receptor for a number of lymphoid cells. The protein is 3 beta-hydroxysteroid dehydrogenase type 7 of Homo sapiens (Human).